The chain runs to 98 residues: NADH-ubiquinone oxidoreductase chain 4L (98 aa).

The next 3 helical transmembrane spans lie at 1–21, 29–49, and 61–81; these read MSLTYMNILVAFVISLTGLLM, SLLCLEGMMLSLFVMVTITIL, and IILLVFAACEAALGLALLVMV.

The protein belongs to the complex I subunit 4L family. As to quaternary structure, core subunit of respiratory chain NADH dehydrogenase (Complex I) which is composed of 45 different subunits.

Its subcellular location is the mitochondrion inner membrane. The catalysed reaction is a ubiquinone + NADH + 5 H(+)(in) = a ubiquinol + NAD(+) + 4 H(+)(out). Core subunit of the mitochondrial membrane respiratory chain NADH dehydrogenase (Complex I) which catalyzes electron transfer from NADH through the respiratory chain, using ubiquinone as an electron acceptor. Part of the enzyme membrane arm which is embedded in the lipid bilayer and involved in proton translocation. This Mystacina tuberculata (New Zealand lesser short-tailed bat) protein is NADH-ubiquinone oxidoreductase chain 4L (MT-ND4L).